The primary structure comprises 203 residues: Hypoxanthine-guanine phosphoribosyltransferase (203 aa).

Positions 66 and 67 each coordinate diphosphate. Glu122 and Asp123 together coordinate Mg(2+). Catalysis depends on Asp126, which acts as the Proton acceptor. GMP-binding positions include Lys154, 175-176 (FV), and Asp182. Arg188 serves as a coordination point for diphosphate.

The protein belongs to the purine/pyrimidine phosphoribosyltransferase family. Requires Mg(2+) as cofactor.

It localises to the cytoplasm. It carries out the reaction IMP + diphosphate = hypoxanthine + 5-phospho-alpha-D-ribose 1-diphosphate. The catalysed reaction is GMP + diphosphate = guanine + 5-phospho-alpha-D-ribose 1-diphosphate. It participates in purine metabolism; IMP biosynthesis via salvage pathway; IMP from hypoxanthine: step 1/1. It functions in the pathway purine metabolism; GMP biosynthesis via salvage pathway; GMP from guanine: step 1/1. Functionally, purine salvage pathway enzyme that catalyzes the transfer of the ribosyl-5-phosphate group from 5-phospho-alpha-D-ribose 1-diphosphate (PRPP) to the N9 position of the 6-oxopurines hypoxanthine and guanine to form the corresponding ribonucleotides IMP (inosine 5'-monophosphate) and GMP (guanosine 5'-monophosphate), with the release of PPi. The sequence is that of Hypoxanthine-guanine phosphoribosyltransferase (hpt) from Mycobacterium avium.